We begin with the raw amino-acid sequence, 435 residues long: Transforming growth factor beta-2 proprotein (435 aa).

A signal peptide spans 1–20; sequence MHYCVLSAFLLLHLVTVALS. N-linked (GlcNAc...) asparagine glycosylation is found at Asn72, Asn140, and Asn241. 4 disulfides stabilise this stretch: Cys309–Cys318, Cys317–Cys380, Cys346–Cys411, and Cys350–Cys413.

The protein belongs to the TGF-beta family. Interacts with the serine proteases, HTRA1 and HTRA3. Interacts with ASPN. Interacts with MFAP5. As to quaternary structure, interacts with Transforming growth factor beta-2 (TGF-beta-2) chain; interaction is non-covalent and maintains (TGF-beta-2) in a latent state. Interacts with LRRC32/GARP; leading to regulate activation of TGF-beta-2. Interacts with NREP; the interaction results in a decrease in TGFB2 autoinduction. In terms of assembly, transforming growth factor beta-2: Homodimer; disulfide-linked. Transforming growth factor beta-2: Interacts with TGF-beta receptors (TGFBR1 and TGFBR2), leading to signal transduction. Post-translationally, the precursor proprotein is cleaved in the Golgi apparatus to form Transforming growth factor beta-2 (TGF-beta-2) and Latency-associated peptide (LAP) chains, which remain non-covalently linked, rendering TGF-beta-2 inactive.

It localises to the secreted. The protein localises to the extracellular space. The protein resides in the extracellular matrix. Functionally, precursor of the Latency-associated peptide (LAP) and Transforming growth factor beta-2 (TGF-beta-2) chains, which constitute the regulatory and active subunit of TGF-beta-2, respectively. Its function is as follows. Required to maintain the Transforming growth factor beta-2 (TGF-beta-2) chain in a latent state during storage in extracellular matrix. Associates non-covalently with TGF-beta-2 and regulates its activation via interaction with 'milieu molecules', such as LTBP1 and LRRC32/GARP, that control activation of TGF-beta-2. Multifunctional protein that regulates various processes such as angiogenesis and heart development. Activation into mature form follows different steps: following cleavage of the proprotein in the Golgi apparatus, Latency-associated peptide (LAP) and Transforming growth factor beta-2 (TGF-beta-2) chains remain non-covalently linked rendering TGF-beta-2 inactive during storage in extracellular matrix. At the same time, LAP chain interacts with 'milieu molecules', such as LTBP1 and LRRC32/GARP, that control activation of TGF-beta-2 and maintain it in a latent state during storage in extracellular milieus. Once activated following release of LAP, TGF-beta-2 acts by binding to TGF-beta receptors (TGFBR1 and TGFBR2), which transduce signal. The chain is Transforming growth factor beta-2 proprotein (TGFB2) from Sus scrofa (Pig).